We begin with the raw amino-acid sequence, 353 residues long: Protein Wnt-11b-2 (353 aa).

The signal sequence occupies residues 1–22 (MALIRHCVTLLLILCCSRLCGA). 3 N-linked (GlcNAc...) asparagine glycosylation sites follow: asparagine 31, asparagine 38, and asparagine 88. Intrachain disulfides connect cysteine 78–cysteine 89, cysteine 128–cysteine 136, cysteine 138–cysteine 155, cysteine 208–cysteine 222, and cysteine 210–cysteine 217. A lipid anchor (O-palmitoleoyl serine; by PORCN) is attached at serine 214. 2 positions are modified to sulfotyrosine: tyrosine 274 and tyrosine 281. Disulfide bonds link cysteine 282-cysteine 313, cysteine 298-cysteine 308, cysteine 312-cysteine 352, cysteine 328-cysteine 343, cysteine 330-cysteine 340, and cysteine 335-cysteine 336. N-linked (GlcNAc...) asparagine glycosylation is present at asparagine 299.

It belongs to the Wnt family. As to quaternary structure, homodimer. Secreted homodimers form a complex with wnt5a homodimers; tyrosine sulfation of both wnt11 and wnt5a by tpst1 is required for this interaction. Interacts with the transmembrane receptor fzd7/fz7. Interacts with lrp6 and ryk. Interacts with tdgf1/frl1. Interacts weakly with frzb1 and strongly with frzb2/crescent. Interaction with frzb2/crescent antagonizes wnt11 function in the neuroectoderm, but enhances it in mesodermal tissue. Glycosylation is required for protein secretion. Post-translationally, palmitoleoylation is required for efficient binding to frizzled receptors. Depalmitoleoylation leads to Wnt signaling pathway inhibition.

Its subcellular location is the secreted. It is found in the extracellular space. The protein localises to the extracellular matrix. Its function is as follows. Ligand for the frizzled7 transmembrane receptor. Primarily acts via non-canonical Wnt pathways mediated by either Ca(2+) and PKC, or by JNK and dvl2/dsh. Depending on the cellular context, can also signal via the canonical Wnt pathway mediated by beta-catenin and dvl2/dsh. May also inhibit canonical Wnt signaling. Maternally initiates dorsal/ventral axis formation by a canonical route, which signals via lrp6. In a complex with wnt5a, activates the canonical and non-canonical processes involved in axis formation. In the non-canonical pathway, acts through fzd7/fz7 to induce phosphorylation of dvl2/dsh. Signals through a non-canonical Wnt pathway to regulate convergent extension movements during gastrulation. Interactions with the secreted Wnt antagonist sfrp5 to coordinate foregut development, acting via a non-canonical wnt pathway whereby sfrp5 restricts wnt11b activity to prevent inappropriate foregut formation. Mediates cardiogenesis via non-canonical Wnt signaling involving JNK-activation and PKC. Acts redundantly with wnt11/wnt11r during pronephros induction. The polypeptide is Protein Wnt-11b-2 (Xenopus tropicalis (Western clawed frog)).